The sequence spans 565 residues: Liver carboxylesterase 1 (565 aa).

An N-terminal signal peptide occupies residues 1–18 (MWLCALSLISLTACLSLG). Cysteine 87 and cysteine 116 are disulfide-bonded. Serine 221 (acyl-ester intermediate) is an active-site residue. A disulfide bridge connects residues cysteine 273 and cysteine 284. The active-site Charge relay system is glutamate 353. Phosphoserine is present on serine 378. N-linked (GlcNAc...) asparagine glycosylation occurs at asparagine 388. The Charge relay system role is filled by histidine 466. N-linked (GlcNAc...) asparagine glycosylation is present at asparagine 489.

It belongs to the type-B carboxylesterase/lipase family. Homotrimer and homohexamer. Binds to beta-glucuronidase. Detected in kidney, liver and lung.

It is found in the endoplasmic reticulum lumen. Its subcellular location is the cytoplasm. The protein resides in the lipid droplet. The enzyme catalyses a carboxylic ester + H2O = an alcohol + a carboxylate + H(+). It carries out the reaction cholesteryl (9Z-octadecenoate) + H2O = cholesterol + (9Z)-octadecenoate + H(+). The catalysed reaction is 2-(5Z,8Z,11Z,14Z-eicosatetraenoyl)-glycerol + H2O = glycerol + (5Z,8Z,11Z,14Z)-eicosatetraenoate + H(+). It catalyses the reaction prostaglandin E2 1-glyceryl ester + H2O = prostaglandin E2 + glycerol + H(+). The enzyme catalyses a cholesterol ester + H2O = cholesterol + a fatty acid + H(+). It carries out the reaction prostaglandin F2alpha 1-glyceryl ester + H2O = prostaglandin F2alpha + glycerol + H(+). Functionally, involved in the detoxification of xenobiotics and in the activation of ester and amide prodrugs. Hydrolyzes aromatic and aliphatic esters, but has no catalytic activity toward amides or a fatty acyl-CoA ester. Displays fatty acid ethyl ester synthase activity, catalyzing the ethyl esterification of oleic acid to ethyloleate. Converts monoacylglycerides to free fatty acids and glycerol. Hydrolyzes of 2-arachidonoylglycerol and prostaglandins. Hydrolyzes cellular cholesteryl esters to free cholesterols and promotes reverse cholesterol transport (RCT) by facilitating both the initial and final steps in the process. First of all, allows free cholesterol efflux from macrophages to extracellular cholesterol acceptors and secondly, releases free cholesterol from lipoprotein-delivered cholesteryl esters in the liver for bile acid synthesis or direct secretion into the bile. The sequence is that of Liver carboxylesterase 1 from Mus musculus (Mouse).